Consider the following 88-residue polypeptide: PTS system cellobiose-specific EIIB component (88 aa).

The 86-residue stretch at 3–88 (KKRIYLFCSA…IDTLLYGKVD (86 aa)) folds into the PTS EIIB type-3 domain. Cys10 functions as the Phosphocysteine intermediate in the catalytic mechanism. Cys10 carries the post-translational modification Phosphocysteine; by EIIA.

The protein resides in the cytoplasm. It carries out the reaction D-cellobiose(out) + N(pros)-phospho-L-histidyl-[protein] = 6-phospho-beta-D-glucosyl-(1-&gt;4)-D-glucose(in) + L-histidyl-[protein]. Functionally, the phosphoenolpyruvate-dependent sugar phosphotransferase system (sugar PTS), a major carbohydrate active transport system, catalyzes the phosphorylation of incoming sugar substrates concomitantly with their translocation across the cell membrane. The enzyme II CelABD PTS system is involved in cellobiose transport. In Aeromonas hydrophila, this protein is PTS system cellobiose-specific EIIB component.